We begin with the raw amino-acid sequence, 458 residues long: Retinoic acid receptor RXR-beta (458 aa).

Residues 1-17 are compositionally biased toward basic and acidic residues; the sequence is GEAGRDGMGDTGRDSRS. The disordered stretch occupies residues 1–105; sequence GEAGRDGMGD…GGSGPPEDVK (105 aa). A modulating region spans residues 1–129; it reads GEAGRDGMGD…PGGPGAGKRL (129 aa). Positions 18–31 are enriched in low complexity; that stretch reads PDSSSPNPLSQGIP. Residues 32–56 are compositionally biased toward pro residues; sequence PSSPPGPPHTPSAPPPPMPPPPLGS. Low complexity predominate over residues 57–68; that stretch reads PFPVISSSMGSP. The span at 69-78 shows a compositional bias: pro residues; sequence GLPPPAPPGF. NR C4-type zinc fingers lie at residues 130–150 and 166–190; these read CAIC…CEGC and CRDN…YQKC. Positions 130–195 form a DNA-binding region, nuclear receptor; sequence CAICGDRSSG…RYQKCLATGM (66 aa). Residues 196 to 220 are hinge; it reads KREAVQEERQRGKDKDGDGDGAGGA. The span at 201–213 shows a compositional bias: basic and acidic residues; that stretch reads QEERQRGKDKDGD. 2 disordered regions span residues 201–223 and 238–261; these read QEER…APEE and QKSD…NDPV. The region spanning 221–454 is the NR LBD domain; that stretch reads PEEMPVDRIL…TFLMEMLEAP (234 aa). The span at 245 to 255 shows a compositional bias: gly residues; that stretch reads EGPGATGGGGS.

Belongs to the nuclear hormone receptor family. NR2 subfamily. In terms of assembly, homodimer (in vitro). Heterodimer with other retinoic acid receptor family members. Binds DNA preferentially as a RAR/RXR heterodimer. Interacts with NR1H3. Interacts with AKAP13. In terms of tissue distribution, expressed in the adrenal gland with main expression in the zona fasciculata (at protein level).

The protein resides in the nucleus. It is found in the cytoplasm. Receptor for retinoic acid. Retinoic acid receptors bind as heterodimers to their target response elements in response to their ligands, all-trans or 9-cis retinoic acid, and regulate gene expression in various biological processes. The RAR/RXR heterodimers bind to the retinoic acid response elements (RARE). The sequence is that of Retinoic acid receptor RXR-beta (Rxrb) from Rattus norvegicus (Rat).